Reading from the N-terminus, the 221-residue chain is Probable transaldolase (221 aa).

The Schiff-base intermediate with substrate role is filled by Lys-83.

This sequence belongs to the transaldolase family. Type 3B subfamily.

The protein localises to the cytoplasm. It catalyses the reaction D-sedoheptulose 7-phosphate + D-glyceraldehyde 3-phosphate = D-erythrose 4-phosphate + beta-D-fructose 6-phosphate. Its pathway is carbohydrate degradation; pentose phosphate pathway; D-glyceraldehyde 3-phosphate and beta-D-fructose 6-phosphate from D-ribose 5-phosphate and D-xylulose 5-phosphate (non-oxidative stage): step 2/3. Transaldolase is important for the balance of metabolites in the pentose-phosphate pathway. In Herpetosiphon aurantiacus (strain ATCC 23779 / DSM 785 / 114-95), this protein is Probable transaldolase.